Consider the following 238-residue polypeptide: tRNA (guanine-N(7)-)-methyltransferase (238 aa).

4 residues coordinate S-adenosyl-L-methionine: E68, E93, D120, and D143. The active site involves D143. Substrate is bound by residues K147, D179, and 216 to 219; that span reads TKFE.

It belongs to the class I-like SAM-binding methyltransferase superfamily. TrmB family.

The enzyme catalyses guanosine(46) in tRNA + S-adenosyl-L-methionine = N(7)-methylguanosine(46) in tRNA + S-adenosyl-L-homocysteine. It participates in tRNA modification; N(7)-methylguanine-tRNA biosynthesis. Its function is as follows. Catalyzes the formation of N(7)-methylguanine at position 46 (m7G46) in tRNA. The chain is tRNA (guanine-N(7)-)-methyltransferase from Shewanella oneidensis (strain ATCC 700550 / JCM 31522 / CIP 106686 / LMG 19005 / NCIMB 14063 / MR-1).